Here is a 542-residue protein sequence, read N- to C-terminus: Chaperonin GroEL (542 aa).

Residues 29–32, 86–90, Gly-413, 476–478, and Asp-492 each bind ATP; these read TLGP, DGTTT, and NAA. The interval 523–542 is disordered; that stretch reads EPAAPAMPGGMDPSMMGGMM. The span at 526 to 542 shows a compositional bias: low complexity; the sequence is APAMPGGMDPSMMGGMM.

Belongs to the chaperonin (HSP60) family. As to quaternary structure, forms a cylinder of 14 subunits composed of two heptameric rings stacked back-to-back. Interacts with the co-chaperonin GroES.

It is found in the cytoplasm. The enzyme catalyses ATP + H2O + a folded polypeptide = ADP + phosphate + an unfolded polypeptide.. Its function is as follows. Together with its co-chaperonin GroES, plays an essential role in assisting protein folding. The GroEL-GroES system forms a nano-cage that allows encapsulation of the non-native substrate proteins and provides a physical environment optimized to promote and accelerate protein folding. This chain is Chaperonin GroEL, found in Streptococcus uberis (strain ATCC BAA-854 / 0140J).